The following is a 109-amino-acid chain: Large ribosomal subunit protein uL22 (109 aa).

Belongs to the universal ribosomal protein uL22 family. Part of the 50S ribosomal subunit.

In terms of biological role, this protein binds specifically to 23S rRNA; its binding is stimulated by other ribosomal proteins, e.g. L4, L17, and L20. It is important during the early stages of 50S assembly. It makes multiple contacts with different domains of the 23S rRNA in the assembled 50S subunit and ribosome. The globular domain of the protein is located near the polypeptide exit tunnel on the outside of the subunit, while an extended beta-hairpin is found that lines the wall of the exit tunnel in the center of the 70S ribosome. The polypeptide is Large ribosomal subunit protein uL22 (Laribacter hongkongensis (strain HLHK9)).